The sequence spans 452 residues: Protoheme IX farnesyltransferase, mitochondrial (452 aa).

The transit peptide at 1 to 27 (MSLVIQPLLMRALNPNLSSILISGRGF) directs the protein to the mitochondrion. A run of 7 helical transmembrane segments spans residues 152–172 (VLVMLSAICSYALSPYPATVL), 235–255 (ILWLGVNPTVAFLGFSNIALY), 267–287 (IINTWVGALVGAIPPLMGWAA), 291–311 (LSHPGAWCLAGLLYAWQFPHF), 341–361 (VALRYSLLMFPLCFGLSYFNV), 364–386 (WYYQLDSAFVNAWMSLWAFKFYF), and 417–437 (TFWVSVLHLPAVLILAILHKK).

It belongs to the UbiA prenyltransferase family.

The protein resides in the mitochondrion membrane. In terms of biological role, converts protoheme IX and farnesyl diphosphate to heme O. The sequence is that of Protoheme IX farnesyltransferase, mitochondrial (COX10) from Kluyveromyces lactis (strain ATCC 8585 / CBS 2359 / DSM 70799 / NBRC 1267 / NRRL Y-1140 / WM37) (Yeast).